The following is a 197-amino-acid chain: MVFHRLSRLGSRIVKELPRERHLSMCGKRILQRSYGQYLQSSPMLQRQTRSFKEALFSNNHKFCTSFSTTSEKGGEKTEKINVTFVDKDGEEIHIKVPVGMNILEAAHENDIELEGACEGSLACSTCHVIVMDTKYYNKLEEPTDEENDMLDLAFGLTATSRLGCQVIAKPELDGVRLAIPSATRNFAVDGFVPKPH.

The transit peptide at 1 to 74 (MVFHRLSRLG…TSFSTTSEKG (74 aa)) directs the protein to the mitochondrion. In terms of domain architecture, 2Fe-2S ferredoxin-type spans 81 to 184 (INVTFVDKDG…GVRLAIPSAT (104 aa)). [2Fe-2S] cluster contacts are provided by Cys-118, Cys-124, Cys-127, and Cys-165.

The protein belongs to the adrenodoxin/putidaredoxin family. [2Fe-2S] cluster serves as cofactor.

It localises to the mitochondrion. Its function is as follows. Associates with the adrenodoxin reductase MFDR to form an efficient low potential electron transfer chain that is able to reduce cytochrome C. The polypeptide is Adrenodoxin-like protein 2, mitochondrial (Arabidopsis thaliana (Mouse-ear cress)).